Reading from the N-terminus, the 129-residue chain is Natriuretic peptides B (129 aa).

Residues 1–26 form the signal peptide; the sequence is MDPQKALSRTLLLLLFLHLSLLGCRS. A disulfide bridge links C107 with C123.

The protein belongs to the natriuretic peptide family. Post-translationally, the precursor molecule is proteolytically cleaved, possibly by FURIN or CORIN, to produce the active peptide. May undergo further proteolytic cleavage by various proteases such as DPP4, MME and possibly FAP, to give rise to a variety of shorter peptides. May be cleaved at Pro-99 by the prolyl endopeptidase FAP (seprase) activity (in vitro). May be degraded by IDE. During IDE degradation, the resulting products initially increase the activation of NPR1 and can also stimulate NPR2 to produce cGMP before the fragments are completely degraded and inactivated by IDE (in vitro).

It localises to the secreted. Cardiac hormone that plays a key role in mediating cardio-renal homeostasis. May also function as a paracrine antifibrotic factor in the heart. Acts by specifically binding and stimulating NPR1 to produce cGMP, which in turn activates effector proteins that drive various biological responses. Involved in regulating the extracellular fluid volume and maintaining the fluid-electrolyte balance through natriuresis, diuresis, vasorelaxation, and inhibition of renin and aldosterone secretion. Binds the clearance receptor NPR3. This chain is Natriuretic peptides B (NPPB), found in Ovis aries (Sheep).